A 495-amino-acid chain; its full sequence is MEPVVRLRGVSKEFPGVVAVDGVDLDILPGEVHVVAGENGAGKSTLMKLLSQVERPTSGEIYISGERVEFHGPGHARRLGVAMVYQEFALAPHLSVAENLFLGREPGRGGFVNRRAEKEEARGLLRRVGLEVDPDRLVSSLTVAEQQRVEIAKALAIDARVVIMDEPTATLAEKEIEELFEVIRDLTSHGRAVLYISHRLDEIFRIADRVTVMRDGKVVATLPVEELDEAKLVRLMVGREIGNLYPKPEAEIGEVLLRVRGLSRGERLKDCSFEVRAGEILGFAGLVGAGRTELARAVFGADPVDSGEIELEGRPLRIRKPQDAIEAGIGYLTEDRKGEGLALQLGIDQNITLASLPARLGFIGLGRERSIAERRREQLNIRTPSVRRKVQVLSGGNQQKVVVARWLETRARVLFFDEPARGIDVGAKAEMFALIGELAREGRGIVLISSYLPELINMCDRILVMRDGRVAGVLEREEFSEEGIIALATGVKETV.

2 ABC transporter domains span residues 5–240 (VRLR…VGRE) and 250–492 (AEIG…TGVK). Residue 37-44 (GENGAGKS) participates in ATP binding.

It belongs to the ABC transporter superfamily. Ribose importer (TC 3.A.1.2.1) family. In terms of assembly, the complex is composed of an ATP-binding protein (RbsA), two transmembrane proteins (RbsC) and a solute-binding protein (RbsB).

The protein localises to the cell membrane. The catalysed reaction is D-ribose(out) + ATP + H2O = D-ribose(in) + ADP + phosphate + H(+). Its function is as follows. Part of the ABC transporter complex RbsABC involved in ribose import. Responsible for energy coupling to the transport system. The polypeptide is Ribose import ATP-binding protein RbsA 3 (Rubrobacter xylanophilus (strain DSM 9941 / JCM 11954 / NBRC 16129 / PRD-1)).